Here is a 367-residue protein sequence, read N- to C-terminus: Fructose-1,6-bisphosphatase class 1 3 (367 aa).

This sequence belongs to the FBPase class 1 family. As to quaternary structure, homotetramer.

It is found in the cytoplasm. It catalyses the reaction beta-D-fructose 1,6-bisphosphate + H2O = beta-D-fructose 6-phosphate + phosphate. Its pathway is carbohydrate biosynthesis; gluconeogenesis. This chain is Fructose-1,6-bisphosphatase class 1 3, found in Paraburkholderia phymatum (strain DSM 17167 / CIP 108236 / LMG 21445 / STM815) (Burkholderia phymatum).